The sequence spans 79 residues: Conotoxin TxMEKL-021 (79 aa).

The first 19 residues, 1–19 (MEKLTILLLVAVVLMSTQA), serve as a signal peptide directing secretion. The propeptide occupies 20–47 (LPQGGGEKRPRENIRFLSKRKSNAERWR). Intrachain disulfides connect Cys51/Cys65, Cys58/Cys69, and Cys64/Cys75.

It belongs to the conotoxin O2 superfamily. As to expression, expressed by the venom duct.

The protein resides in the secreted. The protein is Conotoxin TxMEKL-021 of Conus textile (Cloth-of-gold cone).